The primary structure comprises 373 residues: Glutamate 5-kinase (373 aa).

Lys16 provides a ligand contact to ATP. Residues Ser56, Asp143, and Asn155 each contribute to the substrate site. 175-176 (TD) contributes to the ATP binding site. The PUA domain occupies 281–359 (RGVVTLDDGA…TKIETLLGYK (79 aa)).

The protein belongs to the glutamate 5-kinase family.

The protein resides in the cytoplasm. The enzyme catalyses L-glutamate + ATP = L-glutamyl 5-phosphate + ADP. The protein operates within amino-acid biosynthesis; L-proline biosynthesis; L-glutamate 5-semialdehyde from L-glutamate: step 1/2. Its function is as follows. Catalyzes the transfer of a phosphate group to glutamate to form L-glutamate 5-phosphate. The sequence is that of Glutamate 5-kinase from Teredinibacter turnerae (strain ATCC 39867 / T7901).